The primary structure comprises 535 residues: CTP synthase (535 aa).

The amidoligase domain stretch occupies residues 1–268 (MPNKYIVVTG…VSKILSRLKL (268 aa)). Residue Ser14 participates in CTP binding. Ser14 is a UTP binding site. Residue 15 to 20 (SVGKGT) participates in ATP binding. Residue Tyr55 coordinates L-glutamine. Residue Asp72 participates in ATP binding. 2 residues coordinate Mg(2+): Asp72 and Glu142. Residues 149 to 151 (DIE), 189 to 194 (KTKPLQ), and Lys225 each bind CTP. Residues 189–194 (KTKPLQ) and Lys225 each bind UTP. An ATP-binding site is contributed by Val243. Residues 302–535 (YTKLKDSYIS…LGFIRAVASL (234 aa)) enclose the Glutamine amidotransferase type-1 domain. An L-glutamine-binding site is contributed by Gly359. Catalysis depends on Cys386, which acts as the Nucleophile; for glutamine hydrolysis. L-glutamine contacts are provided by residues 387-390 (FGFQ), Glu410, and Arg467. Catalysis depends on residues His511 and Glu513.

This sequence belongs to the CTP synthase family. Homotetramer in the presence of ATP and UTP. The enzyme dissociates into homodimers in the absence of substrate nucleotides.

The catalysed reaction is UTP + L-glutamine + ATP + H2O = CTP + L-glutamate + ADP + phosphate + 2 H(+). It catalyses the reaction L-glutamine + H2O = L-glutamate + NH4(+). It carries out the reaction UTP + NH4(+) + ATP = CTP + ADP + phosphate + 2 H(+). It functions in the pathway pyrimidine metabolism; CTP biosynthesis via de novo pathway; CTP from UDP: step 2/2. Allosterically activated by GTP, when glutamine is the substrate; GTP has no effect on the reaction when ammonia is the substrate. The allosteric effector GTP functions by stabilizing the protein conformation that binds the tetrahedral intermediate(s) formed during glutamine hydrolysis. Inhibited by the product CTP, via allosteric rather than competitive inhibition. Catalyzes the ATP-dependent amination of UTP to CTP with either L-glutamine or ammonia as the source of nitrogen. Regulates intracellular CTP levels through interactions with the four ribonucleotide triphosphates. The sequence is that of CTP synthase from Saccharolobus solfataricus (strain ATCC 35092 / DSM 1617 / JCM 11322 / P2) (Sulfolobus solfataricus).